A 293-amino-acid chain; its full sequence is Glycine--tRNA ligase alpha subunit (293 aa).

The protein belongs to the class-II aminoacyl-tRNA synthetase family. In terms of assembly, tetramer of two alpha and two beta subunits.

Its subcellular location is the cytoplasm. It carries out the reaction tRNA(Gly) + glycine + ATP = glycyl-tRNA(Gly) + AMP + diphosphate. This is Glycine--tRNA ligase alpha subunit from Oceanobacillus iheyensis (strain DSM 14371 / CIP 107618 / JCM 11309 / KCTC 3954 / HTE831).